The following is a 198-amino-acid chain: Prolactin (198 aa).

3 cysteine pairs are disulfide-bonded: cysteine 4-cysteine 11, cysteine 58-cysteine 173, and cysteine 190-cysteine 198.

It belongs to the somatotropin/prolactin family. In terms of tissue distribution, pituitary gland.

Its subcellular location is the secreted. In Chelonia mydas (Green sea-turtle), this protein is Prolactin.